Here is a 418-residue protein sequence, read N- to C-terminus: 1-acylglycerol-3-phosphate O-acyltransferase (418 aa).

One can recognise an AB hydrolase-1 domain in the interval 121–251 (PTLVMVHGYG…RATWKGAVLN (131 aa)). Positions 197–201 (GHSFG) match the GXSXG motif. The short motif at 379-384 (HFVFID) is the HXXXXD motif element.

It belongs to the peptidase S33 family. ABHD4/ABHD5 subfamily.

It is found in the cytoplasm. It carries out the reaction a 1-acyl-sn-glycero-3-phosphate + an acyl-CoA = a 1,2-diacyl-sn-glycero-3-phosphate + CoA. Lysophosphatidic acid acyltransferase which functions in phosphatidic acid biosynthesis. Is highly specific for lysophosphatidic acid and able to use different acyl-CoA donors. May regulate neutral lipid accumulation and participate in the regulation of lipid turnover in vegetative cells. Possesses additional triacylglycerol lipase and phospholipase A2 activities in vitro. Is not active as esterase or lysophospholipase. The polypeptide is 1-acylglycerol-3-phosphate O-acyltransferase (Arabidopsis thaliana (Mouse-ear cress)).